Here is a 93-residue protein sequence, read N- to C-terminus: Small ribosomal subunit protein uS19 (93 aa).

This sequence belongs to the universal ribosomal protein uS19 family.

Protein S19 forms a complex with S13 that binds strongly to the 16S ribosomal RNA. This chain is Small ribosomal subunit protein uS19, found in Desulfitobacterium hafniense (strain Y51).